A 125-amino-acid chain; its full sequence is Small ribosomal subunit protein uS12 (125 aa).

Positions 9-31 (RQGREVEKIKSKSPAMENSPQRR) are disordered. D89 carries the post-translational modification 3-methylthioaspartic acid.

Belongs to the universal ribosomal protein uS12 family. As to quaternary structure, part of the 30S ribosomal subunit. Contacts proteins S8 and S17. May interact with IF1 in the 30S initiation complex.

Its function is as follows. With S4 and S5 plays an important role in translational accuracy. Interacts with and stabilizes bases of the 16S rRNA that are involved in tRNA selection in the A site and with the mRNA backbone. Located at the interface of the 30S and 50S subunits, it traverses the body of the 30S subunit contacting proteins on the other side and probably holding the rRNA structure together. The combined cluster of proteins S8, S12 and S17 appears to hold together the shoulder and platform of the 30S subunit. The polypeptide is Small ribosomal subunit protein uS12 (Verminephrobacter eiseniae (strain EF01-2)).